Consider the following 486-residue polypeptide: Cardiolipin synthase A (486 aa).

The next 2 membrane-spanning stretches (helical) occupy residues 3-23 (TFYTVMSWLLVFGYWLLIAGV) and 38-58 (MAWLLIIYILPLVGIIAYLSL). 2 PLD phosphodiesterase domains span residues 219-246 (MDLRQHRKVVLIDNYIAYTGSMNLVDPR) and 399-426 (EGGLLHSKSILVDGQLSLVGTVNLDMRS). Catalysis depends on residues histidine 224, lysine 226, aspartate 231, histidine 404, lysine 406, and aspartate 411.

It belongs to the phospholipase D family. Cardiolipin synthase subfamily. ClsA sub-subfamily.

It localises to the cell inner membrane. It catalyses the reaction 2 a 1,2-diacyl-sn-glycero-3-phospho-(1'-sn-glycerol) = a cardiolipin + glycerol. Its function is as follows. Catalyzes the reversible phosphatidyl group transfer from one phosphatidylglycerol molecule to another to form cardiolipin (CL) (diphosphatidylglycerol) and glycerol. The sequence is that of Cardiolipin synthase A from Erwinia tasmaniensis (strain DSM 17950 / CFBP 7177 / CIP 109463 / NCPPB 4357 / Et1/99).